A 215-amino-acid polypeptide reads, in one-letter code: MPSYTLHYFNHRGRAEICRMLFAAAGVQYNDRRIESSEWGSMRSKMPCSMMPMLELDNKIQIPQSMAMARYLAREFGFHGKNNMDMARVDYISDSFYDILDDYMRMYHDKDGRMMFSRSKDMNSSSEKRMRYQETCRRIFPYLEKTLEMRNGGNQFFMGDQITMADMMCFCALENPLMEDQNILRSYPKLQALRNRVINHPKMSAYLQKRSRTEF.

The GST N-terminal domain occupies 2 to 80; that stretch reads PSYTLHYFNH…YLAREFGFHG (79 aa). Positions 82–215 constitute a GST C-terminal domain; it reads NNMDMARVDY…YLQKRSRTEF (134 aa).

It belongs to the GST superfamily. As to expression, lens.

Functionally, S-crystallins are structural components of squids and octopi eye lens. Contains relatively little if any GST activity. This Enteroctopus dofleini (North Pacific giant octopus) protein is S-crystallin 4.